Reading from the N-terminus, the 175-residue chain is Nucleoplasmin-3 (175 aa).

Position 2 is an N-acetylalanine (A2). S16 is modified (phosphoserine). Residue R27 is modified to Omega-N-methylarginine. A phosphoserine mark is found at S147 and S151.

It belongs to the nucleoplasmin family. As to quaternary structure, interacts with NPM (via N-terminus). Forms a pentamer with NPM at a ratio 4:1 (NPM3/NPM). Two pentamers form a decamer. Phosphorylated. Predominantly expressed in testis.

The protein localises to the nucleus. It is found in the nucleolus. Plays a role in the regulation of diverse cellular processes such as ribosome biogenesis, chromatin remodeling or protein chaperoning. Modulates the histone chaperone function and the RNA-binding activity of nucleolar phosphoprotein B23/NPM. Efficiently mediates chromatin remodeling when included in a pentamer containing NPM3 and NPM. This is Nucleoplasmin-3 (Npm3) from Mus musculus (Mouse).